The primary structure comprises 504 residues: Pyrichalasin C-7 hydroxylase (504 aa).

Residues 1–17 (MLNSAACIVLAITAVLG) form the signal peptide. Cys449 provides a ligand contact to heme.

It belongs to the cytochrome P450 family. Heme is required as a cofactor.

Its pathway is mycotoxin biosynthesis. Functionally, cytochrome P450 monooxygenase; part of the gene cluster that mediates the biosynthesis of the mycotoxin pyrichalasin H, a tyrosine-derived cytochalasan that inhibits the growth of rice seedlings, but also inhibits lymphocyte capping and actin polymerization and alters cell morphology. Pyrichalasin H is indicated as the responsible agent for the genus-specific pathogenicity of M.grisea toward crabgrass. The first step in the pathway is catalyzed by the O-methyltransferase pyiA which methylates free tyrosine to generate the precursor O-methyltyrosine. The hybrid PKS-NRPS pyiS, assisted by the enoyl reductase pyiC, are responsible for fusion of the O-methyltyrosine precursor and the polyketide backbone. The polyketide synthase module (PKS) of pyiS is responsible for the synthesis of the polyketide backbone and the downstream nonribosomal peptide synthetase (NRPS) amidates the carboxyl end of the polyketide with the O-methyltyrosine precursor. As the NRPS A-domain demonstrates substrate tolerance, pyiS can also use phenylalanine, tyrosine and even para-chlorophenylalanine as amino acid precursor, which leads to the production of novel cytochalasans, including halogenated cytochalasans. Because pyiS lacks a designated enoylreductase (ER) domain, the required activity is provided the enoyl reductase pyiC. Reduction by the hydrolyase pyiE leads to 1,5-dihydropyrrolone, which is substrate for dehydration and intra-molecular Diels-Alder cyclization by the Diels-Alderase pyiF to yield the required isoindolone-fused macrocycle. The tailoring cytochrome P450 monooxygenases piyD and piyG catalyze the hydroxylation at C-18 and C-7, respectivily, whereas the short-chain dehydrogenase/reductase pyiH reduces the carbonyl at C-21 in preparation for the transfer of an acetyl group by the acetyltransferase pyiB. These 3 reactions whose order is not clear yet, lead to the production of O-methylpyrichalasin J, a deacetylated pyrichalasin H. Finally, pyiB to converts O-methylpyrichalasin J into the final product pyrichalasin H via acetylation of C-21. This chain is Pyrichalasin C-7 hydroxylase, found in Pyricularia grisea (Crabgrass-specific blast fungus).